The following is a 175-amino-acid chain: MILVLLLILIAFLYIYFPSSLNQKNQELSTLSKNLINNYSFVPKTFKQKIHIIIPLKSNVDNIIHNILKQTEKVDIMTIIVPKEYENKLKNGKNSLCKLLRDTCIIQISGGYGMLSKERETGTILVYVNNLFSDPNTLKNMLNRISKSTKKIFYFSDATVIDNSIPIGIDDAYKL.

The first 23 residues, 1-23 (MILVLLLILIAFLYIYFPSSLNQ), serve as a signal peptide directing secretion.

This is an uncharacterized protein from Invertebrate iridescent virus 6 (IIV-6).